Consider the following 380-residue polypeptide: Succinyl-diaminopimelate desuccinylase (380 aa).

H69 contributes to the Zn(2+) binding site. The active site involves D71. D102 lines the Zn(2+) pocket. The active-site Proton acceptor is the E135. Residues E136, E164, and H353 each coordinate Zn(2+).

The protein belongs to the peptidase M20A family. DapE subfamily. In terms of assembly, homodimer. It depends on Zn(2+) as a cofactor. Requires Co(2+) as cofactor.

The enzyme catalyses N-succinyl-(2S,6S)-2,6-diaminopimelate + H2O = (2S,6S)-2,6-diaminopimelate + succinate. It participates in amino-acid biosynthesis; L-lysine biosynthesis via DAP pathway; LL-2,6-diaminopimelate from (S)-tetrahydrodipicolinate (succinylase route): step 3/3. Catalyzes the hydrolysis of N-succinyl-L,L-diaminopimelic acid (SDAP), forming succinate and LL-2,6-diaminopimelate (DAP), an intermediate involved in the bacterial biosynthesis of lysine and meso-diaminopimelic acid, an essential component of bacterial cell walls. The chain is Succinyl-diaminopimelate desuccinylase from Cereibacter sphaeroides (strain ATCC 17029 / ATH 2.4.9) (Rhodobacter sphaeroides).